The chain runs to 350 residues: WD repeat-containing protein DWA2 (350 aa).

WD repeat units follow at residues 39–79, 118–158, 166–205, 206–246, 250–290, and 311–350; these read KEEN…FDQR, AHVG…KSAE, GMRH…KNNS, IERA…FPVQ, GHTH…EHKT, and DYED…LPRR.

Interacts with ABI5 and DDB1A and DWA1.

The protein localises to the nucleus. The protein operates within protein modification; protein ubiquitination. In terms of biological role, component of the CUL4-RBX1-DDB1-DWA1/DWA2 E3 ubiquitin-protein ligase complex that acts as a negative regulator in abscisic acid (ABA) signaling. May function as the substrate recognition module within this complex leading to ABI5 degradation. Functionally redundant with DWA1. The polypeptide is WD repeat-containing protein DWA2 (DWA2) (Arabidopsis thaliana (Mouse-ear cress)).